The sequence spans 198 residues: Neutrophil gelatinase-associated lipocalin (198 aa).

The signal sequence occupies residues 1–20 (MPLGLLWLGLALLGALHAQA). Gln-21 bears the Pyrrolidone carboxylic acid mark. 72-74 (YAT) contributes to the a carboxymycobactin binding site. Asn-85 is a glycosylation site (N-linked (GlcNAc...) asparagine). Cysteines 96 and 195 form a disulfide. Tyr-126 contributes to the enterobactin binding site. Positions 145, 154, and 158 each coordinate a carboxymycobactin. Enterobactin is bound at residue Lys-154.

Belongs to the calycin superfamily. Lipocalin family. Monomer. Homodimer; disulfide-linked. Heterodimer; disulfide-linked with MMP9. As to expression, detected in neutrophils (at protein level). Expressed in bone marrow and in tissues that are prone to exposure to microorganism. High expression is found in bone marrow as well as in uterus, prostate, salivary gland, stomach, appendix, colon, trachea and lung. Expressed in the medullary tubules of the kidney. Not found in the small intestine or peripheral blood leukocytes.

It localises to the secreted. The protein localises to the cytoplasmic granule lumen. Its subcellular location is the cytoplasmic vesicle lumen. In terms of biological role, iron-trafficking protein involved in multiple processes such as apoptosis, innate immunity and renal development. Binds iron through association with 2,3-dihydroxybenzoic acid (2,3-DHBA), a siderophore that shares structural similarities with bacterial enterobactin, and delivers or removes iron from the cell, depending on the context. Iron-bound form (holo-24p3) is internalized following binding to the SLC22A17 (24p3R) receptor, leading to release of iron and subsequent increase of intracellular iron concentration. In contrast, association of the iron-free form (apo-24p3) with the SLC22A17 (24p3R) receptor is followed by association with an intracellular siderophore, iron chelation and iron transfer to the extracellular medium, thereby reducing intracellular iron concentration. Involved in apoptosis due to interleukin-3 (IL3) deprivation: iron-loaded form increases intracellular iron concentration without promoting apoptosis, while iron-free form decreases intracellular iron levels, inducing expression of the proapoptotic protein BCL2L11/BIM, resulting in apoptosis. Involved in innate immunity; limits bacterial proliferation by sequestering iron bound to microbial siderophores, such as enterobactin. Can also bind siderophores from M.tuberculosis. This chain is Neutrophil gelatinase-associated lipocalin (LCN2), found in Homo sapiens (Human).